The chain runs to 546 residues: Chaperonin GroEL (546 aa).

ATP contacts are provided by residues 30–33 (TLGP), Lys51, 87–91 (DGTTT), Gly415, and Asp496. Residues 526–546 (PQKDAPAGGGMPDMGGMGGMM) form a disordered region. The span at 532–546 (AGGGMPDMGGMGGMM) shows a compositional bias: gly residues.

The protein belongs to the chaperonin (HSP60) family. Forms a cylinder of 14 subunits composed of two heptameric rings stacked back-to-back. Interacts with the co-chaperonin GroES.

It localises to the cytoplasm. The enzyme catalyses ATP + H2O + a folded polypeptide = ADP + phosphate + an unfolded polypeptide.. In terms of biological role, together with its co-chaperonin GroES, plays an essential role in assisting protein folding. The GroEL-GroES system forms a nano-cage that allows encapsulation of the non-native substrate proteins and provides a physical environment optimized to promote and accelerate protein folding. This Ruegeria pomeroyi (strain ATCC 700808 / DSM 15171 / DSS-3) (Silicibacter pomeroyi) protein is Chaperonin GroEL.